We begin with the raw amino-acid sequence, 382 residues long: uncharacterized protein (382 aa).

The next 12 membrane-spanning stretches (helical) occupy residues 14–34 (GLLL…LWLA), 45–65 (VVSS…GYVI), 79–99 (FIFA…SWLA), 102–122 (FVAG…LMCS), 131–151 (LLAA…LLVS), 157–177 (LMSV…PLLF), 204–224 (LGVN…GLMP), 235–255 (ASIG…QWPI), 270–290 (VQVF…AMAP), 291–311 (ALFI…AWAC), 325–345 (ALLL…AMLM), and 348–368 (FSDN…LLML).

This sequence belongs to the major facilitator superfamily. YcaD (TC 2.A.1.26) family.

It is found in the cell inner membrane. This is an uncharacterized protein from Escherichia coli (strain K12 / MC4100 / BW2952).